The following is a 98-amino-acid chain: NADH-ubiquinone oxidoreductase chain 4L (98 aa).

Helical transmembrane passes span M1–I21, L26–V46, and I61–I81.

Belongs to the complex I subunit 4L family. As to quaternary structure, core subunit of respiratory chain NADH dehydrogenase (Complex I) which is composed of 45 different subunits.

The protein localises to the mitochondrion inner membrane. The catalysed reaction is a ubiquinone + NADH + 5 H(+)(in) = a ubiquinol + NAD(+) + 4 H(+)(out). In terms of biological role, core subunit of the mitochondrial membrane respiratory chain NADH dehydrogenase (Complex I) which catalyzes electron transfer from NADH through the respiratory chain, using ubiquinone as an electron acceptor. Part of the enzyme membrane arm which is embedded in the lipid bilayer and involved in proton translocation. The protein is NADH-ubiquinone oxidoreductase chain 4L (MT-ND4L) of Papio hamadryas (Hamadryas baboon).